Consider the following 400-residue polypeptide: GTPase Obg (400 aa).

The Obg domain maps to 1-159 (MKFVDEVQIR…RTLKLELLLL (159 aa)). The OBG-type G domain maps to 160 to 333 (ADVGMLGLPN…VCYDILDLLD (174 aa)). Residues 166–173 (GLPNAGKS), 191–195 (FTTLV), 213–216 (DIPG), 283–286 (NKMD), and 314–316 (TAI) each bind GTP. Residues Ser173 and Thr193 each contribute to the Mg(2+) site.

Belongs to the TRAFAC class OBG-HflX-like GTPase superfamily. OBG GTPase family. As to quaternary structure, monomer. Mg(2+) is required as a cofactor.

The protein resides in the cytoplasm. In terms of biological role, an essential GTPase which binds GTP, GDP and possibly (p)ppGpp with moderate affinity, with high nucleotide exchange rates and a fairly low GTP hydrolysis rate. Plays a role in control of the cell cycle, stress response, ribosome biogenesis and in those bacteria that undergo differentiation, in morphogenesis control. This chain is GTPase Obg, found in Aeromonas hydrophila subsp. hydrophila (strain ATCC 7966 / DSM 30187 / BCRC 13018 / CCUG 14551 / JCM 1027 / KCTC 2358 / NCIMB 9240 / NCTC 8049).